The following is a 1313-amino-acid chain: Mitogen-activated protein kinase kinase kinase 15 (1313 aa).

The disordered stretch occupies residues 1-58 (MESGGGNAPAGALGAASESPQCPPPPGVEGAAGPAEPDGAAEGAAGGSGEGESGGGPR). The segment covering 28 to 43 (VEGAAGPAEPDGAAEG) has biased composition (low complexity). Residues 44–57 (AAGGSGEGESGGGP) show a composition bias toward gly residues. In terms of domain architecture, Protein kinase spans 652–908 (NGERVVLGKG…TAELLREGFL (257 aa)). ATP contacts are provided by residues 658–666 (LGKGTYGIV) and Lys-681. The active-site Proton acceptor is Asp-773. The tract at residues 939 to 958 (EPMATSSSEHGSVSPDSDAQ) is disordered. Over residues 942-955 (ATSSSEHGSVSPDS) the composition is skewed to polar residues. Ser-994 carries the post-translational modification Phosphoserine. A coiled-coil region spans residues 1179 to 1225 (QLGELRQETNRLLEHLVEKEREYQNLLRQTLEQKTQELYHLQLKLKS).

This sequence belongs to the protein kinase superfamily. STE Ser/Thr protein kinase family. MAP kinase kinase kinase subfamily. It depends on Mg(2+) as a cofactor. In terms of tissue distribution, isoform 2 and isoform 3 are widely expressed. Isoform 2 highest levels are observed in fetal brain, and isoform 3 highest levels in pancreas, peripheral blood leukocytes, fetal brain and spleen.

The catalysed reaction is L-seryl-[protein] + ATP = O-phospho-L-seryl-[protein] + ADP + H(+). It catalyses the reaction L-threonyl-[protein] + ATP = O-phospho-L-threonyl-[protein] + ADP + H(+). Its activity is regulated as follows. Contains an N-terminal autoinhibitory domain. Activated by phosphorylation at Thr-812, inhibited by phosphorylation at Ser-924 and Ser-994. Serine/threonine kinase which acts as a component of the MAP kinase signal transduction pathway. Once activated, acts as an upstream activator of the p38 MAPK signal transduction cascade through the phosphorylation and activation of several MAP kinase kinases. May function in a signal transduction pathway that is activated by various cell stresses and leads to apoptosis. Involved in phosphorylation of WNK4 in response to osmotic stress or hypotonic low-chloride stimulation via the p38 MAPK signal transduction cascade. The chain is Mitogen-activated protein kinase kinase kinase 15 (MAP3K15) from Homo sapiens (Human).